A 446-amino-acid polypeptide reads, in one-letter code: Chromosomal replication initiator protein DnaA (446 aa).

The interval 1-92 (MENISDLWNS…SQAEEEIDLP (92 aa)) is domain I, interacts with DnaA modulators. The interval 87-107 (EEIDLPPSKPNSAQDDSNHLP) is disordered. The tract at residues 93 to 109 (PSKPNSAQDDSNHLPQS) is domain II. Polar residues predominate over residues 96-107 (PNSAQDDSNHLP). Positions 110–326 (MLNPKYTFDT…GALIRVVAYS (217 aa)) are domain III, AAA+ region. Residues glycine 154, glycine 156, lysine 157, and threonine 158 each contribute to the ATP site. The domain IV, binds dsDNA stretch occupies residues 327 to 446 (SLINKDINAD…QVEEINDILK (120 aa)).

It belongs to the DnaA family. Oligomerizes as a right-handed, spiral filament on DNA at oriC.

Its subcellular location is the cytoplasm. Plays an essential role in the initiation and regulation of chromosomal replication. ATP-DnaA binds to the origin of replication (oriC) to initiate formation of the DNA replication initiation complex once per cell cycle. Binds the DnaA box (a 9 base pair repeat at the origin) and separates the double-stranded (ds)DNA. Forms a right-handed helical filament on oriC DNA; dsDNA binds to the exterior of the filament while single-stranded (ss)DNA is stabiized in the filament's interior. The ATP-DnaA-oriC complex binds and stabilizes one strand of the AT-rich DNA unwinding element (DUE), permitting loading of DNA polymerase. After initiation quickly degrades to an ADP-DnaA complex that is not apt for DNA replication. Binds acidic phospholipids. This Bacillus cereus (strain ATCC 10987 / NRS 248) protein is Chromosomal replication initiator protein DnaA.